A 396-amino-acid chain; its full sequence is S-adenosylmethionine synthase (396 aa).

H14 is an ATP binding site. Residue D16 participates in Mg(2+) binding. K(+) is bound at residue E42. L-methionine contacts are provided by E55 and Q98. The flexible loop stretch occupies residues 98–108; that stretch reads QSPDIAMGVDK. ATP contacts are provided by residues 174–176, 240–241, D249, 255–256, A272, and K276; these read DGK, RF, and RK. D249 lines the L-methionine pocket. Position 280 (K280) interacts with L-methionine.

It belongs to the AdoMet synthase family. As to quaternary structure, homotetramer; dimer of dimers. The cofactor is Mg(2+). Requires K(+) as cofactor.

It is found in the cytoplasm. The enzyme catalyses L-methionine + ATP + H2O = S-adenosyl-L-methionine + phosphate + diphosphate. It functions in the pathway amino-acid biosynthesis; S-adenosyl-L-methionine biosynthesis; S-adenosyl-L-methionine from L-methionine: step 1/1. Functionally, catalyzes the formation of S-adenosylmethionine (AdoMet) from methionine and ATP. The overall synthetic reaction is composed of two sequential steps, AdoMet formation and the subsequent tripolyphosphate hydrolysis which occurs prior to release of AdoMet from the enzyme. The protein is S-adenosylmethionine synthase of Caldicellulosiruptor saccharolyticus (strain ATCC 43494 / DSM 8903 / Tp8T 6331).